Consider the following 249-residue polypeptide: Uridylate kinase (249 aa).

13–16 contributes to the ATP binding site; sequence KLSG. UMP is bound at residue G55. ATP contacts are provided by G56 and R60. Residues D75 and 136-143 each bind UMP; that span reads IGNPFFTT. The ATP site is built by T163, F169, and D172.

Belongs to the UMP kinase family. As to quaternary structure, homohexamer.

It is found in the cytoplasm. It catalyses the reaction UMP + ATP = UDP + ADP. Its pathway is pyrimidine metabolism; CTP biosynthesis via de novo pathway; UDP from UMP (UMPK route): step 1/1. Its activity is regulated as follows. Inhibited by UTP. Its function is as follows. Catalyzes the reversible phosphorylation of UMP to UDP. The polypeptide is Uridylate kinase (Baumannia cicadellinicola subsp. Homalodisca coagulata).